Here is a 636-residue protein sequence, read N- to C-terminus: Sodium-dependent proline transporter (636 aa).

At 1–45 (MKKLQGAHLRKPVTPDLLMTPSDQGDVDLDVDFAAHRGNWTGKLD) the chain is on the cytoplasmic side. The residue at position 20 (Thr20) is a Phosphothreonine. Phosphoserine is present on Ser22. A run of 3 helical transmembrane segments spans residues 46 to 66 (FLLS…FPYR), 74 to 93 (AFLV…LFFL), and 117 to 137 (GAGA…NMII). The Extracellular portion of the chain corresponds to 138–214 (AYVLFYLFAS…QGIGSPGEIR (77 aa)). A glycan (N-linked (GlcNAc...) asparagine) is linked at Asn182. 9 helical membrane-spanning segments follow: residues 215–233 (WNLC…LCIL), 242–259 (VVYF…MLLV), 295–312 (IFYS…FASY), 324–345 (FIVT…FSVL), 378–397 (LPLS…TLGL), 425–443 (VFSG…ILTT), 459–479 (SFGL…VYGI), 500–519 (ACWL…YSIV), and 538–556 (LGIL…GMLV). Over 557-636 (AVLREEGSLW…EIAEEEESMM (80 aa)) the chain is Cytoplasmic. Ser573 and Ser582 each carry phosphoserine. Thr588 carries the post-translational modification Phosphothreonine. A Phosphotyrosine modification is found at Tyr591. Phosphoserine occurs at positions 598 and 600.

Belongs to the sodium:neurotransmitter symporter (SNF) (TC 2.A.22) family. SLC6A7 subfamily. Brain specific (at protein level). Highly expressed in hippocampus, corpus striatum and temporal cortex. Also expressed in frontal cortex, occipital cortex and, at lower levels, in cerebellum and parietal cortex (at protein level).

The protein resides in the synaptic cell membrane. It catalyses the reaction L-proline(out) + chloride(out) + 2 Na(+)(out) = L-proline(in) + chloride(in) + 2 Na(+)(in). The enzyme catalyses L-pipecolate(out) + chloride(out) + 2 Na(+)(out) = L-pipecolate(in) + chloride(in) + 2 Na(+)(in). Functionally, brain specific sodium (and chloride)-dependent proline transporter. Terminates the action of proline by its high affinity sodium-dependent reuptake into presynaptic terminals. This Homo sapiens (Human) protein is Sodium-dependent proline transporter.